The chain runs to 240 residues: Octanoyltransferase (240 aa).

A BPL/LPL catalytic domain is found at 49-233; that stretch reads GEAPELVWLL…AFESVFGATR (185 aa). Substrate contacts are provided by residues 87–94, 162–164, and 175–177; these read RGGQVTYH, AIG, and GIA. Cysteine 193 serves as the catalytic Acyl-thioester intermediate.

Belongs to the LipB family.

It is found in the cytoplasm. It carries out the reaction octanoyl-[ACP] + L-lysyl-[protein] = N(6)-octanoyl-L-lysyl-[protein] + holo-[ACP] + H(+). The protein operates within protein modification; protein lipoylation via endogenous pathway; protein N(6)-(lipoyl)lysine from octanoyl-[acyl-carrier-protein]: step 1/2. Its function is as follows. Catalyzes the transfer of endogenously produced octanoic acid from octanoyl-acyl-carrier-protein onto the lipoyl domains of lipoate-dependent enzymes. Lipoyl-ACP can also act as a substrate although octanoyl-ACP is likely to be the physiological substrate. This is Octanoyltransferase from Bradyrhizobium sp. (strain BTAi1 / ATCC BAA-1182).